We begin with the raw amino-acid sequence, 117 residues long: Gamma-aminobutyric acid receptor-associated protein-like 1 (117 aa).

The Phosphatidylethanolamine amidated glycine; alternate moiety is linked to residue Gly116. Gly116 is lipidated: Phosphatidylserine amidated glycine; alternate. Lys117 is a propeptide (removed in mature form).

Belongs to the ATG8 family. As to quaternary structure, interacts with ATG13, OPRK1, RB1CC1 and ULK1. Interacts with TP53INP1 and TP53INP2. Directly interacts with SQSTM1. Interacts with ATG3, ATG7 and MAP15. Interacts with TECPR2. Interacts with TBC1D5. Interacts with MAPK15. Interacts with TRIM5. Interacts with MEFV and TRIM21. Interacts with WDFY3. Interacts with the reticulophagy receptor TEX264. Interacts with UBA5. Interacts with KBTBD6 and KBTBD7; the interaction is direct. Interacts with reticulophagy regulators RETREG1, RETREG2 and RETREG3. Interacts with IRGM. Interacts with DNM2. Interacts with NCOA4 (via C-terminus). The precursor molecule is cleaved by ATG4 (ATG4A, ATG4B, ATG4C or ATG4D) to expose the glycine at the C-terminus and form the cytosolic form, GABARAPL1-I. The processed form is then activated by APG7L/ATG7, transferred to ATG3 and conjugated to phosphatidylethanolamine (PE) phospholipid to form the membrane-bound form, GABARAPL1-II. During non-canonical autophagy, the processed form is conjugated to phosphatidylserine (PS) phospholipid. ATG4 proteins also mediate the delipidation of PE-conjugated forms required for GABARAPL1 recycling when autophagosomes fuse with lysosomes. In addition, ATG4B and ATG4D mediate delipidation of ATG8 proteins conjugated to PS during non-canonical autophagy. ATG4B constitutes the major protein for proteolytic activation. ATG4D is the main enzyme for delipidation activity.

The protein localises to the cytoplasmic vesicle. The protein resides in the autophagosome. Its subcellular location is the cytoplasmic vesicle membrane. It is found in the cytoplasm. It localises to the cytoskeleton. The protein localises to the endoplasmic reticulum. The protein resides in the golgi apparatus. Functionally, ubiquitin-like modifier that increases cell-surface expression of kappa-type opioid receptor through facilitating anterograde intracellular trafficking of the receptor. Involved in formation of autophagosomal vacuoles. While LC3s are involved in elongation of the phagophore membrane, the GABARAP/GATE-16 subfamily is essential for a later stage in autophagosome maturation. Through its interaction with the reticulophagy receptor TEX264, participates in the remodeling of subdomains of the endoplasmic reticulum into autophagosomes upon nutrient stress, which then fuse with lysosomes for endoplasmic reticulum turnover. This is Gamma-aminobutyric acid receptor-associated protein-like 1 from Pongo abelii (Sumatran orangutan).